The sequence spans 433 residues: Histidine--tRNA ligase (433 aa).

Belongs to the class-II aminoacyl-tRNA synthetase family. As to quaternary structure, homodimer.

It localises to the cytoplasm. It carries out the reaction tRNA(His) + L-histidine + ATP = L-histidyl-tRNA(His) + AMP + diphosphate + H(+). The protein is Histidine--tRNA ligase of Crocosphaera subtropica (strain ATCC 51142 / BH68) (Cyanothece sp. (strain ATCC 51142)).